The chain runs to 148 residues: uncharacterized protein (148 aa).

The 62-residue stretch at 2–63 (LDELDKRILY…LINPFKAGYE (62 aa)) folds into the HTH asnC-type domain. A DNA-binding region (H-T-H motif) is located at residues 21 to 40 (YSEIARILGVPESTVRVRVK).

This is an uncharacterized protein from Pyrococcus furiosus (strain ATCC 43587 / DSM 3638 / JCM 8422 / Vc1).